Consider the following 348-residue polypeptide: N-acetyl-gamma-glutamyl-phosphate reductase (348 aa).

The active site involves Cys-149.

It belongs to the NAGSA dehydrogenase family. Type 1 subfamily.

It localises to the cytoplasm. The enzyme catalyses N-acetyl-L-glutamate 5-semialdehyde + phosphate + NADP(+) = N-acetyl-L-glutamyl 5-phosphate + NADPH + H(+). The protein operates within amino-acid biosynthesis; L-arginine biosynthesis; N(2)-acetyl-L-ornithine from L-glutamate: step 3/4. In terms of biological role, catalyzes the NADPH-dependent reduction of N-acetyl-5-glutamyl phosphate to yield N-acetyl-L-glutamate 5-semialdehyde. In Cellvibrio japonicus (strain Ueda107) (Pseudomonas fluorescens subsp. cellulosa), this protein is N-acetyl-gamma-glutamyl-phosphate reductase.